The sequence spans 463 residues: Putative dipeptidase YtjP (463 aa).

Residue His85 participates in Zn(2+) binding. Asp87 is a catalytic residue. Residue Asp116 participates in Zn(2+) binding. The active-site Proton acceptor is the Glu150. The Zn(2+) site is built by Glu151, Asp174, and His436.

This sequence belongs to the peptidase M20A family. Requires Zn(2+) as cofactor.

This chain is Putative dipeptidase YtjP (ytjP), found in Bacillus subtilis (strain 168).